The primary structure comprises 189 residues: Lumazine protein (189 aa).

Lumazine-binding repeat units follow at residues 1–96 (MFKG…LGKG) and 97–189 (ALTG…SNEW).

6,7-dimethyl-8-(1-D-ribityl)lumazine is required as a cofactor.

Its function is as follows. Antenna protein that modulates the color of the bioluminescence emission of the luciferase. In the presence of LumP, luciferase emission is shifted to higher energy values (shorter wavelength). This chain is Lumazine protein (luxL), found in Photobacterium phosphoreum.